The chain runs to 469 residues: Putative dipeptidase SSP1012 (469 aa).

H84 serves as a coordination point for Zn(2+). D86 is an active-site residue. A Zn(2+)-binding site is contributed by D115. E149 serves as the catalytic Proton acceptor. Positions 150, 173, and 440 each coordinate Zn(2+).

This sequence belongs to the peptidase M20A family. It depends on Zn(2+) as a cofactor.

The chain is Putative dipeptidase SSP1012 from Staphylococcus saprophyticus subsp. saprophyticus (strain ATCC 15305 / DSM 20229 / NCIMB 8711 / NCTC 7292 / S-41).